We begin with the raw amino-acid sequence, 578 residues long: Lipoprotein A (578 aa).

The signal sequence occupies residues Met1 to Ser27. A lipid anchor (N-palmitoyl cysteine) is attached at Cys28. Cys28 carries the S-diacylglycerol cysteine lipid modification. Disordered stretches follow at residues Lys35–Ala135 and Ala172–Asp203. Positions Asn41–Thr50 are enriched in polar residues. Basic and acidic residues predominate over residues Asn51–Thr74. The segment covering Asn75 to Asn96 has biased composition (polar residues). The span at Ile108–Ser119 shows a compositional bias: low complexity. Over residues Ala172 to Lys181 the composition is skewed to basic and acidic residues.

Belongs to the M.pulmonis LipAB lipoprotein family.

It localises to the cell membrane. The protein is Lipoprotein A (lipA) of Mycoplasmopsis pulmonis (strain UAB CTIP) (Mycoplasma pulmonis).